Consider the following 119-residue polypeptide: Large ribosomal subunit protein bL20 (119 aa).

Belongs to the bacterial ribosomal protein bL20 family.

In terms of biological role, binds directly to 23S ribosomal RNA and is necessary for the in vitro assembly process of the 50S ribosomal subunit. It is not involved in the protein synthesizing functions of that subunit. This Clostridium beijerinckii (strain ATCC 51743 / NCIMB 8052) (Clostridium acetobutylicum) protein is Large ribosomal subunit protein bL20.